The primary structure comprises 170 residues: Protein SprT (170 aa).

The SprT-like domain occupies 22 to 163; the sequence is LQQANLTLQT…RCRRCGKTLR (142 aa). Zn(2+) is bound at residue histidine 78. The active site involves glutamate 79. Histidine 82 provides a ligand contact to Zn(2+).

This sequence belongs to the SprT family. It depends on Zn(2+) as a cofactor.

It localises to the cytoplasm. The polypeptide is Protein SprT (Pectobacterium carotovorum subsp. carotovorum (strain PC1)).